Reading from the N-terminus, the 260-residue chain is Proteasome subunit alpha (260 aa).

Belongs to the peptidase T1A family. As to quaternary structure, the 20S proteasome core is composed of 14 alpha and 14 beta subunits that assemble into four stacked heptameric rings, resulting in a barrel-shaped structure. The two inner rings, each composed of seven catalytic beta subunits, are sandwiched by two outer rings, each composed of seven alpha subunits. The catalytic chamber with the active sites is on the inside of the barrel. Has a gated structure, the ends of the cylinder being occluded by the N-termini of the alpha-subunits. Is capped at one or both ends by the proteasome regulatory ATPase, PAN.

It is found in the cytoplasm. Its activity is regulated as follows. The formation of the proteasomal ATPase PAN-20S proteasome complex, via the docking of the C-termini of PAN into the intersubunit pockets in the alpha-rings, triggers opening of the gate for substrate entry. Interconversion between the open-gate and close-gate conformations leads to a dynamic regulation of the 20S proteasome proteolysis activity. Component of the proteasome core, a large protease complex with broad specificity involved in protein degradation. This chain is Proteasome subunit alpha, found in Thermococcus sp. (strain JCM 11816 / KS-1).